The primary structure comprises 288 residues: Signal recognition particle receptor FtsY (288 aa).

GTP is bound by residues 93-100, 175-179, and 233-236; these read GINGTGKT, DTAGR, and TKLD.

It belongs to the GTP-binding SRP family. FtsY subfamily. Part of the signal recognition particle protein translocation system, which is composed of SRP and FtsY.

The protein localises to the cell membrane. Its subcellular location is the cytoplasm. The catalysed reaction is GTP + H2O = GDP + phosphate + H(+). Functionally, involved in targeting and insertion of nascent membrane proteins into the cytoplasmic membrane. Acts as a receptor for the complex formed by the signal recognition particle (SRP) and the ribosome-nascent chain (RNC). This Thermoplasma acidophilum (strain ATCC 25905 / DSM 1728 / JCM 9062 / NBRC 15155 / AMRC-C165) protein is Signal recognition particle receptor FtsY.